The following is a 2344-amino-acid chain: Mucin-4 (2344 aa).

Positions 1 to 30 (MRGPHGVSWRVPWLCLSCLCSCLLLLPVNT) are cleaved as a signal peptide. Residues 32–46 (TTSAPKTSTALPSST) show a composition bias toward low complexity. Disordered regions lie at residues 32–760 (TTSA…QGSI), 773–1036 (QKMS…TTST), 1072–1130 (VPSL…TPSV), 1171–1197 (STVA…MGAS), and 1233–1269 (SGLT…TVPP). Residues 47-100 (NPSQMTSQVSNPTASSYRMTKNTGQASPMVTSSSITTLPQSQHTGSMKTTRNPQ) are compositionally biased toward polar residues. The segment at 81–1006 (ITTLPQSQHT…VSTLVTSTQE (926 aa)) is variable number of tandem repeats (VNTR). Low complexity-rich tracts occupy residues 101-116 (TTGT…ASSS) and 123-137 (TTSQ…TTTS). The O-linked (GalNAc...) threonine glycan is linked to Thr133. The segment covering 142 to 225 (ESSSPPSTSV…GGMKTTRNPQ (84 aa)) has biased composition (polar residues). The span at 226 to 273 (TTGTTEVTTTLSASSSDHPTSSPESTPGNTAPRTTETSTTTTTKVLMT) shows a compositional bias: low complexity. Polar residues predominate over residues 274–305 (SLQQKLPTGSTLGTSTQELTTLPQSQHTGIMK). 2 stretches are compositionally biased toward low complexity: residues 306 to 322 (TTSR…TTRT) and 335 to 349 (TSSQ…TTTS). Over residues 373-436 (SGDTGHTMAV…GMKTTRNPQR (64 aa)) the composition is skewed to polar residues. Thr391 and Thr392 each carry an O-linked (GalNAc...) threonine glycan. Residues 437–446 (TTPTEVTTST) are compositionally biased toward low complexity. Residues 447-468 (LSASSSDQVQVETTSRATLSPD) show a composition bias toward polar residues. Residues 469-492 (TTTTSHAPSVSSSSPSPPSTEGTS) are compositionally biased toward low complexity. A glycan (O-linked (GalNAc...) threonine) is linked at Thr470. O-linked (GalNAc...) serine glycosylation is present at Ser479. The span at 493-509 (VDTGLTTAVTTQDSTPA) shows a compositional bias: polar residues. Positions 510 to 546 (TTQGSLTSSSQTLSTVSPLSTSTQETSTQELTSSQSQ) are enriched in low complexity. A compositionally biased stretch (polar residues) spans 547–580 (HTGSMKTTHNPQTTRNTEVTTTLSASSSDQVQVE). The segment covering 581-594 (TTSQTTLSDATTTS) has biased composition (low complexity). Positions 599-682 (ESSSPPSTSD…GGMKTTRNPQ (84 aa)) are enriched in polar residues. Low complexity-rich tracts occupy residues 683–698 (TTGT…ASSS) and 705–719 (TSSQ…TTTS). Composition is skewed to polar residues over residues 724–760 (ESSS…QGSI) and 773–807 (QKMS…SSRP). Over residues 808–828 (QTTSVTSTLSSSPSGSTPVQT) the composition is skewed to low complexity. Over residues 829 to 868 (RSVTSSSDERTNPTSSGVSNTSPATTEVLTPTSSPESTPG) the composition is skewed to polar residues. Over residues 869–915 (NTAPRTTETSTTTTTKVLMTSLQQKLPTGSTLGTSTPTEVTTTLSAS) the composition is skewed to low complexity. The span at 916–994 (SSDQVQVETT…ISVTPSTQKM (79 aa)) shows a compositional bias: polar residues. Over residues 995–1015 (STVSTLVTSTQELTSSQSQRT) the composition is skewed to low complexity. A compositionally biased stretch (polar residues) spans 1016 to 1026 (GSMGTSSKPQA). A compositionally biased stretch (low complexity) spans 1027–1036 (TTPTEVTTST). Over residues 1072-1083 (VPSLMHSSKPQA) the composition is skewed to polar residues. Residues 1084–1096 (TTPTEVTTSTLSS) show a composition bias toward low complexity. Residues 1097–1116 (FSRGSTQTQTVSWETSSSGK) are compositionally biased toward polar residues. Composition is skewed to low complexity over residues 1118–1130 (TAPS…TPSV), 1175–1188 (HRQS…HSQS), and 1233–1267 (SGLT…RSTV). The 161-residue stretch at 1332–1492 (GHSGVMLISL…TGYTGRCGPT (161 aa)) folds into the NIDO domain. The tract at residues 1574-1597 (GRHRTGLAAGTTSPLSASSTSSGG) is disordered. The segment covering 1580–1597 (LAAGTTSPLSASSTSSGG) has biased composition (low complexity). Residues 1609–1804 (RPAWTFGDPH…HYGMTSETNG (196 aa)) enclose the VWFD domain. Asn1644, Asn1660, Asn1672, Asn1689, Asn1698, Asn1704, Asn1715, Asn1724, Asn1759, Asn1780, Asn1787, Asn1829, Asn1874, Asn1926, Asn1951, Asn1974, Asn1981, Asn2029, and Asn2048 each carry an N-linked (GlcNAc...) asparagine glycan. One can recognise an EGF-like 1 domain in the interval 2047–2086 (QNHSCPVNYCYNHGHCDISGPPDCQPTCTCAPAFTGNRCF). 3 cysteine pairs are disulfide-bonded: Cys2051–Cys2062, Cys2056–Cys2074, and Cys2076–Cys2085. N-linked (GlcNAc...) asparagine glycosylation is found at Asn2114 and Asn2121. A helical transmembrane segment spans residues 2173–2193 (GPLIHYLNNQLISAVMEAFLL). Asn2227 carries an N-linked (GlcNAc...) asparagine glycan. In terms of domain architecture, EGF-like 2 spans 2256 to 2295 (VSPCSEGYCHNGGQCKHLPDGPQCTCATFSIYTSWGERCE). Disulfide bonds link Cys2259/Cys2270, Cys2264/Cys2279, and Cys2281/Cys2294. A helical membrane pass occupies residues 2301–2321 (LGAFFGILFGALGALLLLAIL).

In terms of assembly, a heterodimeric complex, composed of a mucin-4 alpha chain and a cysteine-rich transmembrane mucin-4 beta chain. Mucin-4 beta chain interacts with ERBB2 via the EGF-like domain 1. In nonpolarized cells, associates with ERBB2 and ERBB3. Post-translationally, proteolytically cleaved into 2 subunits, mucin-4 alpha chain and mucin-4 beta chain. Mucin-4 alpha subunit is highly O-glycosylated. In terms of processing, mucin-4 beta subunit is predominantly N-glycosylated. As to expression, expression is developmentally regulated in the mammary gland, dramatically increases in the lactating gland compared with the virgin mammary gland, while decreasing again during mammary gland involution. Expressed in 13762 ascites cells. Overexpressed in some aggressive mammary tumors. Overexpression seems to block cell-cell and cell-matrix interactions to protect tumor cells from immune surveillance, and to promote metastasis.

The protein resides in the cell membrane. Its subcellular location is the secreted. Functionally, membrane-bound mucin, a family of highly glycosylated proteins that constitute the major component of the mucus, the slimy and viscous secretion covering epithelial surfaces. These glycoproteins play important roles in the protection of the epithelium and are implicated in epithelial renewal and differentiation. Regulates cellular behavior through both anti-adhesive effects on cell-cell and cell-extracellular matrix interactions and its ability to act as an intramembrane ligand for ERBB2. Plays an important role in proliferation and differentiation of epithelial cells by inducing specific phosphorylation of ERBB2. In polarized epithelial cells, segregates ERBB2 and other ERBB receptors and prevents ERBB2 from acting as a coreceptor. The interaction with ERBB2 leads to enhanced expression of CDKN1B. The formation of a MUC4-ERBB2-ERBB3-NRG1 complex leads to down-regulation of CDKN1B, resulting in repression of apoptosis and stimulation of proliferation. Its ability to promote tumor growth may be mainly due to repression of apoptosis as opposed to proliferation. This chain is Mucin-4 (Muc4), found in Rattus norvegicus (Rat).